A 328-amino-acid chain; its full sequence is MPGCPCPGCGMAGPRLLFLTALALELLGRAGGSQPALRSRGTATACRLDNKESESWGALLSGERLDTWICSLLGSLMVGLSGVFPLLVIPLEMGTMLRSEAGAWHLKQLLSFALGGLLGNVFLHLLPEAWAYTCSASPGGEGQSLQQQQQLGLWVIAGILTFLALEKMFLDSKEEGTSQVSGYLNLLANTIDNFTHGLAVAASFLVSKKIGLLTTMAILLHEIPHEVGDFAILLRAGFDRWSAAKLQLSTALGGLLGAGFAICTQSPKGVEETAAWVLPFTSGGFLYIALVNVLPDLLEEEDPWRSLQQLLLLCAGIVVMVLFSLFVD.

Residues 1–7 lie on the Lumenal side of the membrane; it reads MPGCPCP. The helical transmembrane segment at 8–28 threads the bilayer; that stretch reads GCGMAGPRLLFLTALALELLG. The Cytoplasmic segment spans residues 29–68; sequence RAGGSQPALRSRGTATACRLDNKESESWGALLSGERLDTW. Residues 69–89 traverse the membrane as a helical segment; the sequence is ICSLLGSLMVGLSGVFPLLVI. Topologically, residues 90–108 are lumenal; the sequence is PLEMGTMLRSEAGAWHLKQ. A helical membrane pass occupies residues 109-129; that stretch reads LLSFALGGLLGNVFLHLLPEA. Over 130–149 the chain is Cytoplasmic; that stretch reads WAYTCSASPGGEGQSLQQQQ. Residues 150-170 form a helical membrane-spanning segment; sequence QLGLWVIAGILTFLALEKMFL. The Lumenal portion of the chain corresponds to 171 to 199; that stretch reads DSKEEGTSQVSGYLNLLANTIDNFTHGLA. A helical membrane pass occupies residues 200 to 220; that stretch reads VAASFLVSKKIGLLTTMAILL. An XEXPHE-motif motif is present at residues 221–226; the sequence is HEIPHE. Residues 221–242 are Cytoplasmic-facing; it reads HEIPHEVGDFAILLRAGFDRWS. Residues 243–263 form a helical membrane-spanning segment; it reads AAKLQLSTALGGLLGAGFAIC. Residues 264–273 lie on the Lumenal side of the membrane; the sequence is TQSPKGVEET. A helical membrane pass occupies residues 274 to 294; sequence AAWVLPFTSGGFLYIALVNVL. Over 295-306 the chain is Cytoplasmic; it reads PDLLEEEDPWRS. The helical transmembrane segment at 307–327 threads the bilayer; that stretch reads LQQLLLLCAGIVVMVLFSLFV. A topological domain (lumenal) is located at residue Asp328.

It belongs to the ZIP transporter (TC 2.A.5) family. Homodimer.

The protein resides in the golgi apparatus membrane. It localises to the cytoplasmic vesicle membrane. It is found in the endoplasmic reticulum membrane. It carries out the reaction Zn(2+)(in) = Zn(2+)(out). Functionally, functions as a zinc transporter transporting Zn(2+) from the Golgi apparatus to the cytosol and thus influences the zinc level at least in areas of the cytosol. May regulate beige adipocyte differentiation. This is Zinc transporter ZIP13 from Pongo abelii (Sumatran orangutan).